A 30-amino-acid polypeptide reads, in one-letter code: Dermaseptin-S3 (30 aa).

The protein belongs to the frog skin active peptide (FSAP) family. Dermaseptin subfamily. As to quaternary structure, monomer and oligomer. Forms aggregates in aqueous environments. In terms of tissue distribution, expressed by the skin glands.

Its subcellular location is the secreted. Functionally, potent antimicrobial peptide with activity against bacteria and protozoa. Also has activity against fungi. Probably acts by disturbing membrane functions with its amphipathic structure. Binds to healthy erythrocytes (this binding is receptor independent), but has very weak hemolytic activity. Does not bind to P.falciparum infected erythrocytes, but accumulates within the parasite. Kills the parasite, but has no hemolytic activity on the host cell. This is Dermaseptin-S3 from Phyllomedusa sauvagei (Sauvage's leaf frog).